We begin with the raw amino-acid sequence, 414 residues long: Histidinol dehydrogenase (414 aa).

Residues tyrosine 116, glutamine 177, and asparagine 200 each contribute to the NAD(+) site. Substrate is bound by residues threonine 223, glutamine 245, and histidine 248. Positions 245 and 248 each coordinate Zn(2+). Active-site proton acceptor residues include glutamate 313 and histidine 314. Positions 314, 347, 401, and 406 each coordinate substrate. Aspartate 347 serves as a coordination point for Zn(2+). A Zn(2+)-binding site is contributed by histidine 406.

Belongs to the histidinol dehydrogenase family. It depends on Zn(2+) as a cofactor.

The enzyme catalyses L-histidinol + 2 NAD(+) + H2O = L-histidine + 2 NADH + 3 H(+). Its pathway is amino-acid biosynthesis; L-histidine biosynthesis; L-histidine from 5-phospho-alpha-D-ribose 1-diphosphate: step 9/9. In terms of biological role, catalyzes the sequential NAD-dependent oxidations of L-histidinol to L-histidinaldehyde and then to L-histidine. The sequence is that of Histidinol dehydrogenase from Staphylococcus epidermidis (strain ATCC 35984 / DSM 28319 / BCRC 17069 / CCUG 31568 / BM 3577 / RP62A).